We begin with the raw amino-acid sequence, 293 residues long: Protein YIF1A (293 aa).

Residues 1–33 form a disordered region; it reads MAYHSGYGAHGSKHRARAAPDPPPLFDDTSGGY. Residue Ala2 is modified to N-acetylalanine. At 2–138 the chain is on the cytoplasmic side; sequence AYHSGYGAHG…PPRQDLNAPD (137 aa). The residue at position 12 (Ser12) is a Phosphoserine. The chain crosses the membrane as a helical span at residues 139-159; sequence LYIPTMAFITYVLLAGMALGI. Residues 160-174 are Lumenal-facing; that stretch reads QKRFSPEVLGLCAST. The helical transmembrane segment at 175–195 threads the bilayer; it reads ALVWVVMEVLALLLGLYLATV. At 196-203 the chain is on the cytoplasmic side; it reads RSDLSTFH. A helical transmembrane segment spans residues 204-226; sequence LLAYSGYKYVGMILSVLTGLLFG. Residues 227–229 lie on the Lumenal side of the membrane; it reads SDG. The chain crosses the membrane as a helical span at residues 230–249; it reads YYVALAWTSSALMYFIVRSL. Residues 250–271 lie on the Cytoplasmic side of the membrane; the sequence is RTAALGPDSMGGPVPRQRLQLY. Residues 272–292 form a helical membrane-spanning segment; it reads LTLGAAAFQPLIIYWLTFHLV.

This sequence belongs to the YIF1 family. Interacts with YIPF5.

Its subcellular location is the endoplasmic reticulum membrane. It is found in the golgi apparatus membrane. It localises to the endoplasmic reticulum-Golgi intermediate compartment membrane. Possible role in transport between endoplasmic reticulum and Golgi. This is Protein YIF1A (YIF1A) from Homo sapiens (Human).